Reading from the N-terminus, the 338-residue chain is Nicotinate-nucleotide--dimethylbenzimidazole phosphoribosyltransferase (338 aa).

Glutamate 305 acts as the Proton acceptor in catalysis.

Belongs to the CobT family.

The enzyme catalyses 5,6-dimethylbenzimidazole + nicotinate beta-D-ribonucleotide = alpha-ribazole 5'-phosphate + nicotinate + H(+). Its pathway is nucleoside biosynthesis; alpha-ribazole biosynthesis; alpha-ribazole from 5,6-dimethylbenzimidazole: step 1/2. Its function is as follows. Catalyzes the synthesis of alpha-ribazole-5'-phosphate from nicotinate mononucleotide (NAMN) and 5,6-dimethylbenzimidazole (DMB). In Rhizobium etli (strain ATCC 51251 / DSM 11541 / JCM 21823 / NBRC 15573 / CFN 42), this protein is Nicotinate-nucleotide--dimethylbenzimidazole phosphoribosyltransferase.